A 220-amino-acid polypeptide reads, in one-letter code: Charged multivesicular body protein 4b (220 aa).

2 disordered regions span residues 1 to 22 (MSLF…SPQE) and 180 to 220 (EIGD…WAAN). Coiled coils occupy residues 21-88 (QEAI…STIE) and 123-181 (IDKV…LLEI).

It belongs to the SNF7 family. Probable core component of the endosomal sorting required for transport complex III (ESCRT-III). ESCRT-III components are thought to multimerize to form a flat lattice on the perimeter membrane of the endosome.

It is found in the cytoplasm. It localises to the cytosol. The protein localises to the late endosome membrane. Its subcellular location is the midbody. Its function is as follows. Probable core component of the endosomal sorting required for transport complex III (ESCRT-III) which is involved in multivesicular bodies (MVBs) formation and sorting of endosomal cargo proteins into MVBs. MVBs contain intraluminal vesicles (ILVs) that are generated by invagination and scission from the limiting membrane of the endosome and mostly are delivered to lysosomes enabling degradation of membrane proteins, such as stimulated growth factor receptors, lysosomal enzymes and lipids. The protein is Charged multivesicular body protein 4b (chmp4b) of Danio rerio (Zebrafish).